The sequence spans 431 residues: Adenylosuccinate synthetase (431 aa).

GTP contacts are provided by residues 13–19 and 41–43; these read GDEGKGK and GHT. The Proton acceptor role is filled by D14. Mg(2+)-binding residues include D14 and G41. IMP-binding positions include 14–17, 39–42, T130, R144, Q225, T240, and R304; these read DEGK and NAGH. The Proton donor role is filled by H42. Substrate is bound at residue 300–306; it reads ATTHRPR. GTP contacts are provided by residues R306, 332-334, and 414-416; these read KLD and STG.

This sequence belongs to the adenylosuccinate synthetase family. Homodimer. Mg(2+) is required as a cofactor.

It is found in the cytoplasm. The catalysed reaction is IMP + L-aspartate + GTP = N(6)-(1,2-dicarboxyethyl)-AMP + GDP + phosphate + 2 H(+). It participates in purine metabolism; AMP biosynthesis via de novo pathway; AMP from IMP: step 1/2. Functionally, plays an important role in the de novo pathway of purine nucleotide biosynthesis. Catalyzes the first committed step in the biosynthesis of AMP from IMP. The sequence is that of Adenylosuccinate synthetase from Nitrosococcus oceani (strain ATCC 19707 / BCRC 17464 / JCM 30415 / NCIMB 11848 / C-107).